Reading from the N-terminus, the 615-residue chain is Medium-chain acyl-CoA ligase ACSF2, mitochondrial (615 aa).

The transit peptide at 1–41 (MAVYVGMLRLGRLCAGSSGVLGARVALSRSWQEARLQGVRF) directs the protein to the mitochondrion. Lysine 179 is subject to N6-acetyllysine. Lysine 182 bears the N6-acetyllysine; alternate mark. Lysine 182 is modified (N6-succinyllysine; alternate). 263-271 (TSGTTGSPK) provides a ligand contact to ATP. An N6-acetyllysine mark is found at lysine 340 and lysine 398. Residue lysine 478 is modified to N6-succinyllysine. 2 residues coordinate ATP: aspartate 493 and arginine 508. Lysine 510 carries the N6-acetyllysine modification. N6-acetyllysine; alternate occurs at positions 544 and 570. N6-succinyllysine; alternate occurs at positions 544 and 570. Lysine 599 is an ATP binding site. Lysine 599 carries the N6-succinyllysine modification.

This sequence belongs to the ATP-dependent AMP-binding enzyme family.

It is found in the mitochondrion. The catalysed reaction is a medium-chain fatty acid + ATP + CoA = a medium-chain fatty acyl-CoA + AMP + diphosphate. It carries out the reaction octanoate + ATP + CoA = octanoyl-CoA + AMP + diphosphate. Acyl-CoA synthases catalyze the initial reaction in fatty acid metabolism, by forming a thioester with CoA. Has some preference toward medium-chain substrates. Plays a role in adipocyte differentiation. The sequence is that of Medium-chain acyl-CoA ligase ACSF2, mitochondrial from Pongo abelii (Sumatran orangutan).